Reading from the N-terminus, the 223-residue chain is Ribose-5-phosphate isomerase A (223 aa).

Residues 32 to 35 (TGST), 85 to 88 (DGAD), and 98 to 101 (KGGG) each bind substrate. Glutamate 107 acts as the Proton acceptor in catalysis. Lysine 125 contributes to the substrate binding site.

This sequence belongs to the ribose 5-phosphate isomerase family. Homodimer.

It catalyses the reaction aldehydo-D-ribose 5-phosphate = D-ribulose 5-phosphate. It participates in carbohydrate degradation; pentose phosphate pathway; D-ribose 5-phosphate from D-ribulose 5-phosphate (non-oxidative stage): step 1/1. Catalyzes the reversible conversion of ribose-5-phosphate to ribulose 5-phosphate. This is Ribose-5-phosphate isomerase A from Stutzerimonas stutzeri (strain A1501) (Pseudomonas stutzeri).